The chain runs to 987 residues: ATP-dependent 6-phosphofructokinase subunit alpha (987 aa).

Residues 1–580 are N-terminal catalytic PFK domain 1; sequence MQSQDSCYGV…LYENFLSTTV (580 aa). Ser-3 is subject to Phosphoserine. A Glycyl lysine isopeptide (Lys-Gly) (interchain with G-Cter in ubiquitin) cross-link involves residue Lys-89. A phosphoserine mark is found at Ser-166, Ser-179, Ser-185, Ser-189, and Ser-192. Residue Gly-215 coordinates ATP. Phosphoserine is present on Ser-217. ATP contacts are provided by residues 278-279 and 308-311; these read RS and GDGS. Residue Asp-309 participates in Mg(2+) binding. Residues 354-356, Arg-391, and 398-400 each bind beta-D-fructose 6-phosphate; these read SID and MGR. Residue Asp-356 is the Proton acceptor of the active site. Residue Thr-450 is modified to Phosphothreonine. Residues Glu-455, Lys-482, and 488-491 each bind beta-D-fructose 6-phosphate; that span reads HVQR. The interdomain linker stretch occupies residues 581 to 594; sequence KDDGSELLPVSDRL. The segment at 595 to 987 is C-terminal regulatory PFK domain 2; sequence NIGIVHVGAP…EVAALAAENK (393 aa). A Glycyl lysine isopeptide (Lys-Gly) (interchain with G-Cter in ubiquitin) cross-link involves residue Lys-625. Residues Arg-665, 722–726, Arg-760, 767–769, Glu-827, Arg-853, 859–862, and Arg-952 contribute to the beta-D-fructose 2,6-bisphosphate site; these read TVSNN, QGG, and HVQQ.

It belongs to the phosphofructokinase type A (PFKA) family. ATP-dependent PFK group I subfamily. Eukaryotic two domain clade 'E' sub-subfamily. Heterooctamer of 4 alpha and 4 beta chains. Mg(2+) serves as cofactor.

The protein localises to the cytoplasm. It is found in the mitochondrion outer membrane. The catalysed reaction is beta-D-fructose 6-phosphate + ATP = beta-D-fructose 1,6-bisphosphate + ADP + H(+). Its pathway is carbohydrate degradation; glycolysis; D-glyceraldehyde 3-phosphate and glycerone phosphate from D-glucose: step 3/4. Its activity is regulated as follows. Allosterically activated by ADP, AMP, or fructose 2,6-bisphosphate, and allosterically inhibited by ATP or citrate. Catalyzes the phosphorylation of D-fructose 6-phosphate to fructose 1,6-bisphosphate by ATP, the first committing step of glycolysis. The sequence is that of ATP-dependent 6-phosphofructokinase subunit alpha (PFK1) from Saccharomyces cerevisiae (strain ATCC 204508 / S288c) (Baker's yeast).